The following is a 365-amino-acid chain: MAKYDRDWFANSIKKIAEKKLEEARRHVEVQLDSAITLDKRHCSLVRHCKSLLINLYENTPIGYDIIMREPLIDLSLKKNDISVFDLVAINSTNGIASLIECKTGHNSKYMLKSFAKKIVSFNEHCSHIEKMLGINIKDSEFILCVESINTGGVLQSVNDHTNKKRRGQSSAFNELSEDKINRIIIWSVLEGENKIVKVYGNHLDTNFDRIMRGPPLFDYLSDLDLEYCSQPWRFIERVIYERIFVEKKRLDEANPKEFTYIEVVNALVDEFSDLAVDNLTLRSIAEQKASEIINHGIEYGIFEEVKKNRYCIKCRGERISTVRENLERKYRNNYINKEAERKAYEEAKKEVKRMHGDLSKFGIT.

This is an uncharacterized protein from Archaeoglobus fulgidus (strain ATCC 49558 / DSM 4304 / JCM 9628 / NBRC 100126 / VC-16).